Consider the following 754-residue polypeptide: Catalase-peroxidase (754 aa).

The segment at 1 to 29 (MGTQPARKLRNRVFPHPHNHRKEKPMAND) is disordered. The span at 7 to 23 (RKLRNRVFPHPHNHRKE) shows a compositional bias: basic residues. Trp106 functions as the Tryptophan radical intermediate in the catalytic mechanism. The tryptophyl-tyrosyl-methioninium (Trp-Tyr) (with M-275) cross-link spans 122 to 249 (WHAAGTYRIA…LAAVQMGLIY (128 aa)). His123 serves as the catalytic Proton acceptor. The segment at residues 249-275 (YVNPEGVDGHPDPLCTAQDVRTTFARM) is a cross-link (tryptophyl-tyrosyl-methioninium (Tyr-Met) (with W-122)). His290 contributes to the heme b binding site.

It belongs to the peroxidase family. Peroxidase/catalase subfamily. In terms of assembly, homodimer. It depends on heme b as a cofactor. Formation of the three residue Trp-Tyr-Met cross-link is important for the catalase, but not the peroxidase activity of the enzyme.

It carries out the reaction H2O2 + AH2 = A + 2 H2O. The catalysed reaction is 2 H2O2 = O2 + 2 H2O. In terms of biological role, bifunctional enzyme with both catalase and broad-spectrum peroxidase activity. Also displays NADH oxidase, isoniazid hydrazine lyase and isonicotinoyl-NAD synthase activities. The protein is Catalase-peroxidase of Synechocystis sp. (strain ATCC 27184 / PCC 6803 / Kazusa).